A 131-amino-acid chain; its full sequence is Small ribosomal subunit protein uS8 (131 aa).

The protein belongs to the universal ribosomal protein uS8 family. Part of the 30S ribosomal subunit. Contacts proteins S5 and S12.

Functionally, one of the primary rRNA binding proteins, it binds directly to 16S rRNA central domain where it helps coordinate assembly of the platform of the 30S subunit. This is Small ribosomal subunit protein uS8 from Mesomycoplasma hyopneumoniae (strain 7448) (Mycoplasma hyopneumoniae).